The sequence spans 258 residues: L-aspartate dehydrogenase 1 (258 aa).

Alanine 121 and asparagine 181 together coordinate NAD(+). Residue histidine 211 is part of the active site.

This sequence belongs to the L-aspartate dehydrogenase family.

The catalysed reaction is L-aspartate + NADP(+) + H2O = oxaloacetate + NH4(+) + NADPH + H(+). The enzyme catalyses L-aspartate + NAD(+) + H2O = oxaloacetate + NH4(+) + NADH + H(+). The protein operates within cofactor biosynthesis; NAD(+) biosynthesis; iminoaspartate from L-aspartate (dehydrogenase route): step 1/1. In terms of biological role, specifically catalyzes the NAD or NADP-dependent dehydrogenation of L-aspartate to iminoaspartate. In Bordetella bronchiseptica (strain ATCC BAA-588 / NCTC 13252 / RB50) (Alcaligenes bronchisepticus), this protein is L-aspartate dehydrogenase 1.